We begin with the raw amino-acid sequence, 602 residues long: Arp2/3 complex-activating protein rickA (602 aa).

Disordered stretches follow at residues serine 307 to lysine 484, valine 516 to glutamine 535, and methionine 555 to lysine 602. The span at threonine 318–alanine 442 shows a compositional bias: pro residues. WH2 domains follow at residues aspartate 472–valine 489 and serine 499–valine 516. The segment covering aspartate 475 to lysine 484 has biased composition (basic and acidic residues). Positions valine 537–aspartate 570 are central and acidic domains. Positions methionine 555–glycine 566 are enriched in low complexity. A compositionally biased stretch (basic residues) spans lysine 578–leucine 590. Over residues asparagine 591 to lysine 602 the composition is skewed to polar residues.

As to quaternary structure, homodimer.

The protein localises to the cell surface. In terms of biological role, recruits and activates the Arp2/3 complex, which in turn leads to actin polymerization, promoting Rickettsia motility during infection. This chain is Arp2/3 complex-activating protein rickA (rickA), found in Rickettsia montanensis.